The following is a 57-amino-acid chain: Small polypeptide DEVIL 20 (57 aa).

A glycan (N-linked (GlcNAc...) asparagine) is linked at asparagine 5. Residues 16–47 (TFKAKCSHMVRKQRAKFYILGRCLAMLVCGRG) are required for DVL/RTFL small polypeptide activity. The chain crosses the membrane as a helical span at residues 29-45 (RAKFYILGRCLAMLVCG).

Belongs to the DVL/RTFL small polypeptides family.

It is found in the cell membrane. In terms of biological role, small polypeptide acting as a regulatory molecule which coordinates cellular responses required for differentiation, growth and development, probably by restricting polar cell proliferation in lateral organs and coordinating socket cell recruitment and differentiation at trichome sites. This chain is Small polypeptide DEVIL 20, found in Arabidopsis thaliana (Mouse-ear cress).